The chain runs to 330 residues: BTB/POZ domain-containing adapter for CUL3-mediated RhoA degradation protein 1 (330 aa).

A disordered region spans residues 1-34 (MSAEASGSSGGHAVTVSGSSPSSSSHVGEEKPGR). The 69-residue stretch at 40-108 (KYVKLNVGGT…LRDGTVPLPD (69 aa)) folds into the BTB domain. The segment covering 282-291 (GGVSSSGAGQ) has biased composition (low complexity). Residues 282–304 (GGVSSSGAGQSEEEGAGAGGGDR) are disordered.

Belongs to the BACURD family.

It is found in the nucleus. Its function is as follows. Substrate-specific adapter of a BCR (BTB-CUL3-RBX1) E3 ubiquitin-protein ligase complex required for synaptic transmission. The BCR(KCTD13) E3 ubiquitin ligase complex mediates the ubiquitination of RHOA, leading to its degradation by the proteasome, thereby regulating the actin cytoskeleton and promoting synaptic transmission. This is BTB/POZ domain-containing adapter for CUL3-mediated RhoA degradation protein 1 from Danio rerio (Zebrafish).